The sequence spans 316 residues: 4-diphosphocytidyl-2-C-methyl-D-erythritol kinase (316 aa).

K23 is an active-site residue. 108 to 118 serves as a coordination point for ATP; the sequence is PVAGGMAGGSA. D150 is a catalytic residue.

It belongs to the GHMP kinase family. IspE subfamily.

The catalysed reaction is 4-CDP-2-C-methyl-D-erythritol + ATP = 4-CDP-2-C-methyl-D-erythritol 2-phosphate + ADP + H(+). Its pathway is isoprenoid biosynthesis; isopentenyl diphosphate biosynthesis via DXP pathway; isopentenyl diphosphate from 1-deoxy-D-xylulose 5-phosphate: step 3/6. Its function is as follows. Catalyzes the phosphorylation of the position 2 hydroxy group of 4-diphosphocytidyl-2C-methyl-D-erythritol. In Mycobacterium avium (strain 104), this protein is 4-diphosphocytidyl-2-C-methyl-D-erythritol kinase.